A 211-amino-acid polypeptide reads, in one-letter code: Thiamine-phosphate synthase (211 aa).

4-amino-2-methyl-5-(diphosphooxymethyl)pyrimidine contacts are provided by residues 37-41 and asparagine 69; that span reads QLREK. Mg(2+)-binding residues include aspartate 70 and glutamate 89. A 4-amino-2-methyl-5-(diphosphooxymethyl)pyrimidine-binding site is contributed by serine 108. 134 to 136 serves as a coordination point for 2-[(2R,5Z)-2-carboxy-4-methylthiazol-5(2H)-ylidene]ethyl phosphate; the sequence is TTT. Lysine 137 serves as a coordination point for 4-amino-2-methyl-5-(diphosphooxymethyl)pyrimidine. Residues glycine 163 and 183–184 contribute to the 2-[(2R,5Z)-2-carboxy-4-methylthiazol-5(2H)-ylidene]ethyl phosphate site; that span reads VS.

This sequence belongs to the thiamine-phosphate synthase family. The cofactor is Mg(2+).

It carries out the reaction 2-[(2R,5Z)-2-carboxy-4-methylthiazol-5(2H)-ylidene]ethyl phosphate + 4-amino-2-methyl-5-(diphosphooxymethyl)pyrimidine + 2 H(+) = thiamine phosphate + CO2 + diphosphate. The enzyme catalyses 2-(2-carboxy-4-methylthiazol-5-yl)ethyl phosphate + 4-amino-2-methyl-5-(diphosphooxymethyl)pyrimidine + 2 H(+) = thiamine phosphate + CO2 + diphosphate. The catalysed reaction is 4-methyl-5-(2-phosphooxyethyl)-thiazole + 4-amino-2-methyl-5-(diphosphooxymethyl)pyrimidine + H(+) = thiamine phosphate + diphosphate. It participates in cofactor biosynthesis; thiamine diphosphate biosynthesis; thiamine phosphate from 4-amino-2-methyl-5-diphosphomethylpyrimidine and 4-methyl-5-(2-phosphoethyl)-thiazole: step 1/1. In terms of biological role, condenses 4-methyl-5-(beta-hydroxyethyl)thiazole monophosphate (THZ-P) and 2-methyl-4-amino-5-hydroxymethyl pyrimidine pyrophosphate (HMP-PP) to form thiamine monophosphate (TMP). The protein is Thiamine-phosphate synthase of Enterococcus faecalis (strain ATCC 700802 / V583).